A 198-amino-acid chain; its full sequence is MRQAGAIAELIEALRCLPGVGPKTAQRMTLHLLQRDRDAAGRLSEALRQALEKVGLCAQCRTLTEHSLCEYCASPGRDRSLLCIVESPAEVLAISRSTGYKGLFFVLNGRLSPLDGIGPEELGLDVLEQRLKDDGVAELILATNTTVEGEATAHYLSDMARRHGVRTTRIAHGIPFGGELEYVDGATLSHAFDGRKDF.

A C4-type zinc finger spans residues 57–72 (CAQCRTLTEHSLCEYC). Residues 80-175 (SLLCIVESPA…RTTRIAHGIP (96 aa)) enclose the Toprim domain.

Belongs to the RecR family.

Its function is as follows. May play a role in DNA repair. It seems to be involved in an RecBC-independent recombinational process of DNA repair. It may act with RecF and RecO. The protein is Recombination protein RecR of Methylococcus capsulatus (strain ATCC 33009 / NCIMB 11132 / Bath).